The primary structure comprises 298 residues: UDP-N-acetylenolpyruvoylglucosamine reductase (298 aa).

The FAD-binding PCMH-type domain occupies 27-206 (VGGPAQRLYR…QQQIRRLLRQ (180 aa)). The active site involves R171. The active-site Proton donor is S220. E290 is an active-site residue.

It belongs to the MurB family. It depends on FAD as a cofactor.

It is found in the cytoplasm. The enzyme catalyses UDP-N-acetyl-alpha-D-muramate + NADP(+) = UDP-N-acetyl-3-O-(1-carboxyvinyl)-alpha-D-glucosamine + NADPH + H(+). It participates in cell wall biogenesis; peptidoglycan biosynthesis. Cell wall formation. The polypeptide is UDP-N-acetylenolpyruvoylglucosamine reductase (Nitrosococcus oceani (strain ATCC 19707 / BCRC 17464 / JCM 30415 / NCIMB 11848 / C-107)).